Consider the following 212-residue polypeptide: Guanylate kinase (212 aa).

In terms of domain architecture, Guanylate kinase-like spans 14-192 (GTALVICAPS…AYDELRATYL (179 aa)). ATP is bound at residue 21-28 (APSGTGKT).

Belongs to the guanylate kinase family.

Its subcellular location is the cytoplasm. It carries out the reaction GMP + ATP = GDP + ADP. Functionally, essential for recycling GMP and indirectly, cGMP. The chain is Guanylate kinase from Lawsonia intracellularis (strain PHE/MN1-00).